Consider the following 128-residue polypeptide: Histone H2A.2 (128 aa).

The protein belongs to the histone H2A family. As to quaternary structure, the nucleosome is a histone octamer containing two molecules each of H2A, H2B, H3 and H4 assembled in one H3-H4 heterotetramer and two H2A-H2B heterodimers. The octamer wraps approximately 147 bp of DNA. Expressed in the generative cell within the bicellular pollen. Not detected in other reproductive or vegetative tissues.

The protein localises to the nucleus. Its subcellular location is the chromosome. In terms of biological role, core component of nucleosome. Nucleosomes wrap and compact DNA into chromatin, limiting DNA accessibility to the cellular machineries which require DNA as a template. Histones thereby play a central role in transcription regulation, DNA repair, DNA replication and chromosomal stability. DNA accessibility is regulated via a complex set of post-translational modifications of histones, also called histone code, and nucleosome remodeling. May be involved in the repression of gene expression in male gametes. This is Histone H2A.2 (gH2A) from Lilium longiflorum (Trumpet lily).